The sequence spans 200 residues: Recombination protein RecR (200 aa).

A C4-type zinc finger spans residues 59 to 74; it reads CEKCNTFTEAQVCEVC. The 96-residue stretch at 82–177 folds into the Toprim domain; sequence ALLCVVETPA…AVTRLARGVP (96 aa).

This sequence belongs to the RecR family.

May play a role in DNA repair. It seems to be involved in an RecBC-independent recombinational process of DNA repair. It may act with RecF and RecO. The sequence is that of Recombination protein RecR from Burkholderia pseudomallei (strain 1106a).